Here is a 142-residue protein sequence, read N- to C-terminus: MAIIIGSDEAGKRLKEVIKSYLLDNKYDVVDVTEGQEVDFVDATLAVAKDVQSQEGNLGIVIDAFGAGSFMVATKIKGMIAAEVSDERSGYMTRGHNNSRMITMGSEIVGDTLAKNVVKGFVEGKYDGGRHQIRVDMLNKMC.

It belongs to the LacAB/RpiB family. In terms of assembly, heteromultimeric protein consisting of LacA and LacB.

It catalyses the reaction aldehydo-D-galactose 6-phosphate = keto-D-tagatose 6-phosphate. It functions in the pathway carbohydrate metabolism; D-galactose 6-phosphate degradation; D-tagatose 6-phosphate from D-galactose 6-phosphate: step 1/1. This chain is Galactose-6-phosphate isomerase subunit LacA, found in Staphylococcus aureus (strain JH9).